Here is a 265-residue protein sequence, read N- to C-terminus: 3-methyl-2-oxobutanoate hydroxymethyltransferase (265 aa).

Mg(2+)-binding residues include D41 and D80. Residues 41–42, D80, and K110 contribute to the 3-methyl-2-oxobutanoate site; that span reads DS. Position 112 (E112) interacts with Mg(2+). E179 (proton acceptor) is an active-site residue.

Belongs to the PanB family. Homodecamer; pentamer of dimers. Mg(2+) serves as cofactor.

The protein localises to the cytoplasm. The enzyme catalyses 3-methyl-2-oxobutanoate + (6R)-5,10-methylene-5,6,7,8-tetrahydrofolate + H2O = 2-dehydropantoate + (6S)-5,6,7,8-tetrahydrofolate. It functions in the pathway cofactor biosynthesis; (R)-pantothenate biosynthesis; (R)-pantoate from 3-methyl-2-oxobutanoate: step 1/2. Functionally, catalyzes the reversible reaction in which hydroxymethyl group from 5,10-methylenetetrahydrofolate is transferred onto alpha-ketoisovalerate to form ketopantoate. In Pseudothermotoga lettingae (strain ATCC BAA-301 / DSM 14385 / NBRC 107922 / TMO) (Thermotoga lettingae), this protein is 3-methyl-2-oxobutanoate hydroxymethyltransferase.